The following is a 225-amino-acid chain: Membrane protein (225 aa).

Topologically, residues 1-20 (MSNETNCTLDFEQSVELFKE) are virion surface. Residues 21 to 41 (YNLFITAFLLFLTIILQYGYA) form a helical membrane-spanning segment. Residues 42 to 51 (TRSKFIYILK) lie on the Intravirion side of the membrane. Residues 52–72 (MIVLWCFWPLNIAVGVISCIY) form a helical membrane-spanning segment. Residues 73-77 (PPNTG) lie on the Virion surface side of the membrane. A helical membrane pass occupies residues 78–98 (GLVAAIILTVFACLSFVGYWI). Residues 99-225 (QSIRLFKRCR…VATGGSSLYT (127 aa)) lie on the Intravirion side of the membrane.

This sequence belongs to the gammacoronaviruses M protein family. Homomultimer. Interacts with envelope E protein in the budding compartment of the host cell, which is located between endoplasmic reticulum and the Golgi complex. Forms a complex with HE and S proteins. Interacts with nucleocapsid N protein. This interaction probably participates in RNA packaging into the virus.

The protein resides in the virion membrane. It is found in the host Golgi apparatus membrane. Functionally, component of the viral envelope that plays a central role in virus morphogenesis and assembly via its interactions with other viral proteins. This chain is Membrane protein, found in Gallus gallus (Chicken).